The sequence spans 332 residues: Acetyl-coenzyme A carboxylase carboxyl transferase subunit beta (332 aa).

The 270-residue stretch at 24-293 (LWIKCPDSGH…PEVIVESEPE (270 aa)) folds into the CoA carboxyltransferase N-terminal domain. Residues 288-332 (VESEPEPEPEPVVAEIIPPTSDLPVSAPAPAPVAAQTPAPAAPSA) are disordered. The span at 298–332 (PVVAEIIPPTSDLPVSAPAPAPVAAQTPAPAAPSA) shows a compositional bias: low complexity.

It belongs to the AccD/PCCB family. In terms of assembly, acetyl-CoA carboxylase is a heterohexamer composed of biotin carboxyl carrier protein (AccB), biotin carboxylase (AccC) and two subunits each of ACCase subunit alpha (AccA) and ACCase subunit beta (AccD).

The protein localises to the cytoplasm. It catalyses the reaction N(6)-carboxybiotinyl-L-lysyl-[protein] + acetyl-CoA = N(6)-biotinyl-L-lysyl-[protein] + malonyl-CoA. It participates in lipid metabolism; malonyl-CoA biosynthesis; malonyl-CoA from acetyl-CoA: step 1/1. Its function is as follows. Component of the acetyl coenzyme A carboxylase (ACC) complex. Biotin carboxylase (BC) catalyzes the carboxylation of biotin on its carrier protein (BCCP) and then the CO(2) group is transferred by the transcarboxylase to acetyl-CoA to form malonyl-CoA. This chain is Acetyl-coenzyme A carboxylase carboxyl transferase subunit beta, found in Rhodopseudomonas palustris (strain BisB18).